A 227-amino-acid polypeptide reads, in one-letter code: Triosephosphate isomerase (227 aa).

Asparagine 9 to lysine 11 lines the substrate pocket. The active-site Electrophile is histidine 93. The active-site Proton acceptor is the glutamate 141. Substrate-binding positions include isoleucine 146, glycine 180, and alanine 201–serine 202.

This sequence belongs to the triosephosphate isomerase family. In terms of assembly, homotetramer; dimer of dimers.

It localises to the cytoplasm. The catalysed reaction is D-glyceraldehyde 3-phosphate = dihydroxyacetone phosphate. Its pathway is carbohydrate biosynthesis; gluconeogenesis. It functions in the pathway carbohydrate degradation; glycolysis; D-glyceraldehyde 3-phosphate from glycerone phosphate: step 1/1. In terms of biological role, involved in the gluconeogenesis. Catalyzes stereospecifically the conversion of dihydroxyacetone phosphate (DHAP) to D-glyceraldehyde-3-phosphate (G3P). This Saccharolobus solfataricus (strain ATCC 35092 / DSM 1617 / JCM 11322 / P2) (Sulfolobus solfataricus) protein is Triosephosphate isomerase.